Consider the following 99-residue polypeptide: Teretoxin Tsu6.4 (99 aa).

The first 21 residues, 1–21, serve as a signal peptide directing secretion; it reads MRLLLILVLLTPVIVAFSVDE. The propeptide occupies 22–53; the sequence is ELNNADGANAASFTADQEVRHKRNLFPAIARR.

Contains 3 disulfide bonds. As to expression, expressed by the venom duct.

The protein localises to the secreted. The sequence is that of Teretoxin Tsu6.4 from Terebra subulata (Chocolate spotted auger).